The sequence spans 110 residues: NADH-quinone oxidoreductase subunit K (110 aa).

Helical transmembrane passes span 13-33 (LNHY…GLFM), 41-61 (ILMS…AFSI), and 73-93 (IIIL…LLIY).

The protein belongs to the complex I subunit 4L family. NDH-1 is composed of 14 different subunits. Subunits NuoA, H, J, K, L, M, N constitute the membrane sector of the complex.

It is found in the cell inner membrane. It carries out the reaction a quinone + NADH + 5 H(+)(in) = a quinol + NAD(+) + 4 H(+)(out). Its function is as follows. NDH-1 shuttles electrons from NADH, via FMN and iron-sulfur (Fe-S) centers, to quinones in the respiratory chain. The immediate electron acceptor for the enzyme in this species is believed to be ubiquinone. Couples the redox reaction to proton translocation (for every two electrons transferred, four hydrogen ions are translocated across the cytoplasmic membrane), and thus conserves the redox energy in a proton gradient. The polypeptide is NADH-quinone oxidoreductase subunit K (Rickettsia conorii (strain ATCC VR-613 / Malish 7)).